The sequence spans 440 residues: Probable circularly permuted 1,3-beta-glucanase (440 aa).

A signal peptide spans 1–20; sequence MHYSLFFGAALAASVSTVSA. A compositionally biased stretch (basic and acidic residues) spans 100 to 112; it reads GEKPKRELKPSIH. Disordered stretches follow at residues 100 to 126 and 153 to 195; these read GEKP…FHEK and PAAP…VAPG. The span at 113–125 shows a compositional bias: basic residues; it reads ERRHGHSHQRFHE. Over residues 153–164 the composition is skewed to low complexity; the sequence is PAAPTSAPGAPG. Basic and acidic residues predominate over residues 177-186; it reads GGDKPKDPKP. An ExDxxE motif motif is present at residues 350 to 355; the sequence is EFDVLE.

Belongs to the PGA52 family.

It localises to the secreted. It catalyses the reaction Hydrolysis of (1-&gt;3)-beta-D-glucosidic linkages in (1-&gt;3)-beta-D-glucans.. Probable circularly permuted 1,3-beta-glucanase involved in cell wall modification through beta-1,3-glucan network alterations such as increased branching or remodeling. The chain is Probable circularly permuted 1,3-beta-glucanase from Arthroderma benhamiae (strain ATCC MYA-4681 / CBS 112371) (Trichophyton mentagrophytes).